The sequence spans 65 residues: Large ribosomal subunit protein bL35 (65 aa).

Belongs to the bacterial ribosomal protein bL35 family.

This Rubrobacter xylanophilus (strain DSM 9941 / JCM 11954 / NBRC 16129 / PRD-1) protein is Large ribosomal subunit protein bL35.